Reading from the N-terminus, the 106-residue chain is Thiosulfate sulfurtransferase GlpE (106 aa).

The 89-residue stretch at 17-105 folds into the Rhodanese domain; it reads EQNEARLVDI…SYRAELPVIA (89 aa). Residue Cys-65 is the Cysteine persulfide intermediate of the active site.

The protein belongs to the GlpE family.

The protein resides in the cytoplasm. The catalysed reaction is thiosulfate + hydrogen cyanide = thiocyanate + sulfite + 2 H(+). The enzyme catalyses thiosulfate + [thioredoxin]-dithiol = [thioredoxin]-disulfide + hydrogen sulfide + sulfite + 2 H(+). Transferase that catalyzes the transfer of sulfur from thiosulfate to thiophilic acceptors such as cyanide or dithiols. May function in a CysM-independent thiosulfate assimilation pathway by catalyzing the conversion of thiosulfate to sulfite, which can then be used for L-cysteine biosynthesis. This is Thiosulfate sulfurtransferase GlpE from Vibrio atlanticus (strain LGP32) (Vibrio splendidus (strain Mel32)).